The primary structure comprises 295 residues: Protoheme IX farnesyltransferase (295 aa).

Transmembrane regions (helical) follow at residues 31–51, 54–74, 98–118, 121–141, 147–167, 173–193, 220–240, 245–265, and 273–293; these read GLVM…IGAA, VLTV…NCYL, FVAL…LSLA, GLTA…YTPM, TALF…WTSV, AGGL…FLAI, LWMA…VPLG, GYAI…ISGI, and ARTF…ALFL.

It belongs to the UbiA prenyltransferase family. Protoheme IX farnesyltransferase subfamily.

It localises to the cell inner membrane. The catalysed reaction is heme b + (2E,6E)-farnesyl diphosphate + H2O = Fe(II)-heme o + diphosphate. It participates in porphyrin-containing compound metabolism; heme O biosynthesis; heme O from protoheme: step 1/1. Its function is as follows. Converts heme B (protoheme IX) to heme O by substitution of the vinyl group on carbon 2 of heme B porphyrin ring with a hydroxyethyl farnesyl side group. The protein is Protoheme IX farnesyltransferase of Anaeromyxobacter dehalogenans (strain 2CP-C).